A 134-amino-acid chain; its full sequence is Small ribosomal subunit protein uS8c (134 aa).

This sequence belongs to the universal ribosomal protein uS8 family. Part of the 30S ribosomal subunit.

The protein localises to the plastid. The protein resides in the chloroplast. One of the primary rRNA binding proteins, it binds directly to 16S rRNA central domain where it helps coordinate assembly of the platform of the 30S subunit. The chain is Small ribosomal subunit protein uS8c (rps8) from Gossypium barbadense (Sea Island cotton).